We begin with the raw amino-acid sequence, 610 residues long: DNA mismatch repair protein MutL (610 aa).

This sequence belongs to the DNA mismatch repair MutL/HexB family.

Its function is as follows. This protein is involved in the repair of mismatches in DNA. It is required for dam-dependent methyl-directed DNA mismatch repair. May act as a 'molecular matchmaker', a protein that promotes the formation of a stable complex between two or more DNA-binding proteins in an ATP-dependent manner without itself being part of a final effector complex. This Rickettsia rickettsii (strain Sheila Smith) protein is DNA mismatch repair protein MutL.